The primary structure comprises 270 residues: Allergen Asp f 7 (270 aa).

Residues 1-21 form the signal peptide; the sequence is MAPIFKSLALVSALFAAISSA. Disordered regions lie at residues 53-97 and 113-167; these read YPTP…QPTQ and ADSA…GPCS. Residues 63–81 are compositionally biased toward low complexity; that stretch reads VVESTPTPTPSAAPEQAEP. The span at 83 to 97 shows a compositional bias: polar residues; sequence ETSTQPETTKSQPTQ. The span at 127–149 shows a compositional bias: low complexity; the sequence is PATTAAPSTSTTTQAAPSAPPAA. Polar residues predominate over residues 150 to 162; sequence NSGSTEKAASSGY.

The sequence is that of Allergen Asp f 7 from Aspergillus fumigatus (strain ATCC MYA-4609 / CBS 101355 / FGSC A1100 / Af293) (Neosartorya fumigata).